Reading from the N-terminus, the 62-residue chain is Large ribosomal subunit protein eL37 (62 aa).

Residues Cys-20, Cys-23, Cys-35, and Cys-38 each contribute to the Zn(2+) site. The C4-type zinc-finger motif lies at 20–38; it reads CRRCGRKAFNVKKGYCAAC.

This sequence belongs to the eukaryotic ribosomal protein eL37 family. Zn(2+) is required as a cofactor.

Functionally, binds to the 23S rRNA. The protein is Large ribosomal subunit protein eL37 (rpl37e) of Pyrococcus abyssi (strain GE5 / Orsay).